We begin with the raw amino-acid sequence, 1260 residues long: Phosphatidylinositol 3,4,5-trisphosphate 5-phosphatase 2 (1260 aa).

In terms of domain architecture, SH2 spans 25–121 (WYHRDLSRAA…GLVCALLLPV (97 aa)). Over residues 126 to 136 (ELDPPDERDAS) the composition is skewed to basic and acidic residues. Residues 126-178 (ELDPPDERDASDGEDEKPPLPPRSGTSVSAPLGPSSPPAAPEPPTPAVESAPN) are disordered. At Ser136 the chain carries Phosphoserine. Over residues 159–171 (PSSPPAAPEPPTP) the composition is skewed to pro residues. Ser243 and Ser355 each carry phosphoserine. At Tyr888 the chain carries Phosphotyrosine. Phosphoserine is present on Ser892. The segment at 899–1120 (GAKSKAPSVS…FLGEAAGGDD (222 aa)) is disordered. Residues 940–952 (PPPTGRPPAPPRA) are compositionally biased toward pro residues. The SH3-binding motif lies at 946–951 (PPAPPR). Residues 953-967 (APREEPLTPRLKPEG) are compositionally biased toward basic and acidic residues. The residue at position 960 (Thr960) is a Phosphothreonine. The NPXY motif motif lies at 985–988 (NPAY). Tyr988 carries the post-translational modification Phosphotyrosine. Composition is skewed to pro residues over residues 998–1013 (LLPP…PVPP), 1050–1061 (LPPPDFPPPPLP), and 1090–1108 (LPPP…PLPP). Ser1133 bears the Phosphoserine mark. Tyr1164 is subject to Phosphotyrosine. The interval 1181 to 1200 (EDLAEEAPCPQAGRTGGLGE) is disordered. The 63-residue stretch at 1198–1260 (LGEAGMGAWL…LLLDTLQLSK (63 aa)) folds into the SAM domain. Ser1259 is subject to Phosphoserine.

Belongs to the inositol 1,4,5-trisphosphate 5-phosphatase family. Interacts with tyrosine phosphorylated form of SHC1. Interacts with EGFR. Upon stimulation by the EGF signaling pathway, it forms a complex with SHC1 and EGFR. Interacts with cytoskeletal protein SORBS3/vinexin, promoting its localization to the periphery of cells. Forms a complex with filamin (FLNA or FLNB), actin, GPIb (GP1BA or GP1BB) that regulates cortical and submembraneous actin. Interacts with c-Met/MET, when c-Met/MET is phosphorylated on 'Tyr-1356'. Interacts with p130Cas/BCAR1. Interacts with CENTD3/ARAP3 via its SAM domain. Interacts with c-Cbl/CBL and CAP/SORBS1. Interacts with activated EPHA2 receptor. Interacts with receptor FCGR2A. Interacts with receptor FCGR2B. Interacts with tyrosine kinase ABL1. Interacts with tyrosine kinase TEC. Interacts with CSF1R. Interacts (via N-terminus) with SH3YL1 (via SH3 domain). Interacts with FCRL6 (tyrosine phosphorylated form). Interacts (via SH2 domain) with tyrosine phosphorylated KLRC1 (via ITIM). Interacts with NEDD9/HEF1. Post-translationally, tyrosine phosphorylated by the members of the SRC family after exposure to a diverse array of extracellular stimuli such as insulin, growth factors such as EGF or PDGF, chemokines, integrin ligands and hypertonic and oxidative stress. May be phosphorylated upon IgG receptor FCGR2B-binding. Phosphorylated at Tyr-988 following cell attachment and spreading. Phosphorylated at Tyr-1164 following EGF signaling pathway stimulation. In terms of tissue distribution, expressed abundantly in skeletal muscle tissue.

The protein localises to the cytoplasm. It localises to the cytosol. It is found in the cytoskeleton. Its subcellular location is the membrane. The protein resides in the cell projection. The protein localises to the filopodium. It localises to the lamellipodium. It is found in the basal cell membrane. Its subcellular location is the nucleus. The protein resides in the nucleus speckle. The protein localises to the spindle pole. The catalysed reaction is a 1,2-diacyl-sn-glycero-3-phospho-(1D-myo-inositol-3,4,5-trisphosphate) + H2O = a 1,2-diacyl-sn-glycero-3-phospho-(1D-myo-inositol-3,4-bisphosphate) + phosphate. It catalyses the reaction 1,2-dioctanoyl-sn-glycero-3-phospho-(1D-myo-inositol-3,4,5-trisphosphate) + H2O = 1,2-dioctanoyl-sn-glycero-3-phospho-(1D-myo-inositol-3,4-bisphosphate) + phosphate. It carries out the reaction 1,2-dihexadecanoyl-sn-glycero-3-phospho-(1D-myo-inositol-3,4,5-trisphosphate) + H2O = 1,2-dihexadecanoyl-sn-glycero-3-phospho-(1D-myo-inositol-3,4-bisphosphate) + phosphate. Activated upon translocation to the sites of synthesis of PtdIns(3,4,5)P3 in the membrane. Enzymatic activity is enhanced in the presence of phosphatidylserine. Functionally, phosphatidylinositol (PtdIns) phosphatase that specifically hydrolyzes the 5-phosphate of phosphatidylinositol-3,4,5-trisphosphate (PtdIns(3,4,5)P3) to produce PtdIns(3,4)P2, thereby negatively regulating the PI3K (phosphoinositide 3-kinase) pathways. Required for correct mitotic spindle orientation and therefore progression of mitosis. Plays a central role in regulation of PI3K-dependent insulin signaling, although the precise molecular mechanisms and signaling pathways remain unclear. While overexpression reduces both insulin-stimulated MAP kinase and Akt activation, its absence does not affect insulin signaling or GLUT4 trafficking. Confers resistance to dietary obesity. May act by regulating AKT2, but not AKT1, phosphorylation at the plasma membrane. Part of a signaling pathway that regulates actin cytoskeleton remodeling. Required for the maintenance and dynamic remodeling of actin structures as well as in endocytosis, having a major impact on ligand-induced EGFR internalization and degradation. Participates in regulation of cortical and submembraneous actin by hydrolyzing PtdIns(3,4,5)P3 thereby regulating membrane ruffling. Regulates cell adhesion and cell spreading. Required for HGF-mediated lamellipodium formation, cell scattering and spreading. Acts as a negative regulator of EPHA2 receptor endocytosis by inhibiting via PI3K-dependent Rac1 activation. Acts as a regulator of neuritogenesis by regulating PtdIns(3,4,5)P3 level and is required to form an initial protrusive pattern, and later, maintain proper neurite outgrowth. Acts as a negative regulator of the FC-gamma-RIIA receptor (FCGR2A). Mediates signaling from the FC-gamma-RIIB receptor (FCGR2B), playing a central role in terminating signal transduction from activating immune/hematopoietic cell receptor systems. Involved in EGF signaling pathway. Upon stimulation by EGF, it is recruited by EGFR and dephosphorylates PtdIns(3,4,5)P3. Plays a negative role in regulating the PI3K-PKB pathway, possibly by inhibiting PKB activity. Down-regulates Fc-gamma-R-mediated phagocytosis in macrophages independently of INPP5D/SHIP1. In macrophages, down-regulates NF-kappa-B-dependent gene transcription by regulating macrophage colony-stimulating factor (M-CSF)-induced signaling. Plays a role in the localization of AURKA and NEDD9/HEF1 to the basolateral membrane at interphase in polarized cysts, thereby mediates cell cycle homeostasis, cell polarization and cilia assembly. Additionally promotion of cilia growth is also facilitated by hydrolysis of (PtdIns(3,4,5)P3) to PtdIns(3,4)P2. Promotes formation of apical membrane-initiation sites during the initial stages of lumen formation via Rho family-induced actin filament organization and CTNNB1 localization to cell-cell contacts. May also hydrolyze PtdIns(1,3,4,5)P4, and could thus affect the levels of the higher inositol polyphosphates like InsP6. Involved in endochondral ossification. This is Phosphatidylinositol 3,4,5-trisphosphate 5-phosphatase 2 from Sus scrofa (Pig).